The chain runs to 334 residues: Nucleoid-associated protein Pfl01_0983 (334 aa).

It belongs to the YejK family.

It is found in the cytoplasm. It localises to the nucleoid. The protein is Nucleoid-associated protein Pfl01_0983 of Pseudomonas fluorescens (strain Pf0-1).